The sequence spans 617 residues: MHDMTKDIEYLTADYDNEKSSIQSVIDAIEGQDFLDVDTTMDDAVSDVSSLDEDGAISLTSSVVGPQGSKLMGYYQNELYDYASQLDSKMKEIIDTPFIEDIDKAFKGITNVKLENILIKNGGGHGRDTYGASGKIAKGDAKKSDSDVYSIDEILKSDQEFVKVIDQHYKEMKKEDKKLSKSDFEKMMTQGASCDYMTVAEAEELEEQKKKEEAIEIAALAGMVVLSCINPVAGAVAIGAYSAYSAANAATGKNIVTGRKLSKEERIMEGLSLIPLPGMGFLKGAGKSLMKLGFKGGEKFAVKTGLQKTMQQAVSRISPKMGMMKNSVLNQSRNFAQNTHVGQMLSNMRGQATHTVQQSRNWIGQQAQNVKRIVNNGLDKEIAHPFKQQLAPAGMGGIKFAETTTLRNMGQNIKRAVTPQNHVTHGPKDSMVRSEGKHSISSHEMNSSKYVESPNYTKVEFGEHYARLRPKKLKANIEYTTPTGHIYRTDHKGRIKEVYVDNLSLKDGDRNSHAQRTVGGEDRLPDDDGGHLIARMFGGSKDIDNLVAQSKFINRPFKEKGHWYNLEKEWQEFLNSGKEVKNIKMEVKYSGNSQRPTIFKVEYEINGERNIRRILNK.

A disordered region spans residues 420–448; the sequence is QNHVTHGPKDSMVRSEGKHSISSHEMNSS. A compositionally biased stretch (basic and acidic residues) spans 426–438; sequence GPKDSMVRSEGKH.

This sequence belongs to the EssD family. As to quaternary structure, interacts (via C-terminal) with EssG; this interaction blocks EssD activity. Interacts with EssE.

The protein localises to the secreted. It localises to the cell membrane. In terms of biological role, component of the type VII secretion system (Ess). Plays a role in Ess secretion during infection. Required for the efficient secretion of EsxA. Required for abscess formation and staphylococcal persistence in host tissue. Possesses a toxic DNase activity that is modulated by EssG by forming a nuclease toxin-antitoxin pair. This nuclease toxin targets competitor bacteria. The polypeptide is Type VII secretion systems protein EssD (Staphylococcus aureus (strain Newman)).